Consider the following 187-residue polypeptide: ATP synthase subunit b 2 (187 aa).

A disordered region spans residues 1–25; it reads MAESHGGAKGPAAGAHTGAEGGHGG. Residues 39–59 form a helical membrane-spanning segment; sequence LVSLAIFFVVLYVIVSKLALP. The interval 103–122 is disordered; the sequence is RAQAIGNESRDKANAQAETE. Residues 110–122 show a composition bias toward basic and acidic residues; that stretch reads ESRDKANAQAETE.

The protein belongs to the ATPase B chain family. In terms of assembly, F-type ATPases have 2 components, F(1) - the catalytic core - and F(0) - the membrane proton channel. F(1) has five subunits: alpha(3), beta(3), gamma(1), delta(1), epsilon(1). F(0) has three main subunits: a(1), b(2) and c(10-14). The alpha and beta chains form an alternating ring which encloses part of the gamma chain. F(1) is attached to F(0) by a central stalk formed by the gamma and epsilon chains, while a peripheral stalk is formed by the delta and b chains.

The protein localises to the cell inner membrane. In terms of biological role, f(1)F(0) ATP synthase produces ATP from ADP in the presence of a proton or sodium gradient. F-type ATPases consist of two structural domains, F(1) containing the extramembraneous catalytic core and F(0) containing the membrane proton channel, linked together by a central stalk and a peripheral stalk. During catalysis, ATP synthesis in the catalytic domain of F(1) is coupled via a rotary mechanism of the central stalk subunits to proton translocation. Functionally, component of the F(0) channel, it forms part of the peripheral stalk, linking F(1) to F(0). The b'-subunit is a diverged and duplicated form of b found in plants and photosynthetic bacteria. The chain is ATP synthase subunit b 2 (atpF2) from Bradyrhizobium diazoefficiens (strain JCM 10833 / BCRC 13528 / IAM 13628 / NBRC 14792 / USDA 110).